The primary structure comprises 1120 residues: ELKS/Rab6-interacting/CAST family member 1 (1120 aa).

The segment at 1 to 54 (MYGSARSVGKVEPSSQSPGRSPRLPRSPRLGHRRTNSTGGSSGNSVGGGSGKTL) is disordered. Lysine 10 is modified (N6-acetyllysine). Positions 13 to 28 (PSSQSPGRSPRLPRSP) are enriched in low complexity. Phosphoserine is present on residues serine 17, serine 21, and serine 37. Residue threonine 38 is modified to Phosphothreonine. Residues 40–51 (GSSGNSVGGGSG) show a composition bias toward gly residues. 6 positions are modified to phosphoserine: serine 55, serine 75, serine 94, serine 824, leucine 965, and serine 1009. A coiled-coil region spans residues 144–992 (RQARDNTIMD…RMKLMADNYE (849 aa)). The span at 801–824 (KHKEQVEKKKSAQMLEEARRREDS) shows a compositional bias: basic and acidic residues. The disordered stretch occupies residues 801–840 (KHKEQVEKKKSAQMLEEARRREDSLSDSSQQLQDSLRKKD). Threonine 1050 bears the Phosphothreonine mark. Residues 1050–1112 (TPPASYNADG…DHCPDILEQV (63 aa)) enclose the FIP-RBD domain. Positions 1060-1104 (EQAAWENELQQMTQEQLQNELEKVEGDNAELQEFANTILQQIADH) form a coiled coil.

Interacts with the GTB-bound forms of RAB6A isoform 1 and isoform 2 and with RAB6B. The interaction was strongest with RAB6B, followed by RAB6A isoform 2 and weakest with RAB6A isoform 1. Part of a complex with CHUK, IKBKB and IKBKG. Interacts with CHUK, IKBKB and IKBKG. The interaction with IKBKG is independent of CHUK and IKBKB. Interacts with NFKBIA. Isoform 2 interacts through its C-terminus with the PDZ domains of RIMS1 and RIMS2. Interacts with ERC2/CAST1. Interacts with SDCCAG8. Part of a cortical microtubule stabilization complex (CMSC) composed of KANK1, PPFIA1, PPFIBP1, ERC1/ELKS, PHLDB2/LL5beta, CLASPs, KIF21A and possibly additional interactors; within CMSCs KANK1 and PHLDB2/LL5beta appear to be the core components for targeting of microtubule-binding proteins KIF21A and CLASPs, whereas PPFIA1, PPFIBP1 and ERC1/ELKS serve as scaffolds for protein clustering. Widely expressed.

It is found in the cytoplasm. Its subcellular location is the cytoskeleton. It localises to the microtubule organizing center. The protein localises to the centrosome. The protein resides in the membrane. It is found in the golgi apparatus membrane. Its subcellular location is the presynaptic active zone. It localises to the cell projection. The protein localises to the podosome. Its function is as follows. Regulatory subunit of the IKK complex. Probably recruits IkappaBalpha/NFKBIA to the complex. May be involved in the organization of the cytomatrix at the nerve terminals active zone (CAZ) which regulates neurotransmitter release. May be involved in vesicle trafficking at the CAZ. May be involved in Rab-6 regulated endosomes to Golgi transport. In Mus musculus (Mouse), this protein is ELKS/Rab6-interacting/CAST family member 1.